Reading from the N-terminus, the 86-residue chain is Large ribosomal subunit protein bL31 (86 aa).

Positions 66–86 are disordered; it reads GMGSANSATSKEQKADKDSQK. The span at 76-86 shows a compositional bias: basic and acidic residues; the sequence is KEQKADKDSQK.

This sequence belongs to the bacterial ribosomal protein bL31 family. Type A subfamily. Part of the 50S ribosomal subunit.

Binds the 23S rRNA. This is Large ribosomal subunit protein bL31 from Prochlorococcus marinus (strain MIT 9215).